Reading from the N-terminus, the 428-residue chain is Adenylosuccinate synthetase (428 aa).

Residues 12–18 (GDEGKGK) and 40–42 (GHT) contribute to the GTP site. Residue Asp13 is the Proton acceptor of the active site. Residues Asp13 and Gly40 each coordinate Mg(2+). Residues 13 to 16 (DEGK), 38 to 41 (NAGH), Thr131, Arg145, Gln226, Thr241, and Arg305 each bind IMP. Catalysis depends on His41, which acts as the Proton donor. 301–307 (ATTGRKR) serves as a coordination point for substrate. Residues Arg307, 333-335 (KLD), and 415-417 (SVG) contribute to the GTP site.

It belongs to the adenylosuccinate synthetase family. In terms of assembly, homodimer. It depends on Mg(2+) as a cofactor.

The protein localises to the cytoplasm. It catalyses the reaction IMP + L-aspartate + GTP = N(6)-(1,2-dicarboxyethyl)-AMP + GDP + phosphate + 2 H(+). It functions in the pathway purine metabolism; AMP biosynthesis via de novo pathway; AMP from IMP: step 1/2. Functionally, plays an important role in the de novo pathway of purine nucleotide biosynthesis. Catalyzes the first committed step in the biosynthesis of AMP from IMP. This chain is Adenylosuccinate synthetase, found in Nitratidesulfovibrio vulgaris (strain DSM 19637 / Miyazaki F) (Desulfovibrio vulgaris).